The following is a 368-amino-acid chain: Proton-coupled zinc antiporter SLC30A8 (368 aa).

Over 1 to 78 (MEFLERTYLV…AKWRLCAASA (78 aa)) the chain is Cytoplasmic. The Zn(2+) site is built by H51, C52, and H53. Residues 51–53 (HCH) carry the HCH Motif; seals regulatory zinc-binding pocket motif. The helical transmembrane segment at 79-99 (ICFFFMVAEVVGGHVAGSLAV) threads the bilayer. The Lumenal, vesicle portion of the chain corresponds to 100–102 (LTD). Residues 103-123 (AAHLLIDLTSFLLSLFSLWLS) traverse the membrane as a helical segment. The Zn(2+) site is built by H105 and D109. Over 124 to 139 (SRPPSKRLTFGWYRAE) the chain is Cytoplasmic. Residues 140 to 160 (ILGALLSVLCIWVVTGVLVYL) traverse the membrane as a helical segment. Residues 161–174 (ACERLLYPDYQIQA) lie on the Lumenal, vesicle side of the membrane. Residues 175–195 (GIMITVSGCAVAANIVLTLIL) traverse the membrane as a helical segment. Over 196 to 216 (HQRHLGHNHKDAQANASVRAA) the chain is Cytoplasmic. The chain crosses the membrane as a helical span at residues 217-237 (FVHALGDVFQSTSVLISALII). Residues H219 and D223 each coordinate Zn(2+). At 238–245 (YFKPDYKM) the chain is on the lumenal, vesicle side. Residues 246–266 (ADPVCTFISSVLALASTVMIL) form a helical membrane-spanning segment. Topologically, residues 267–368 (KDFSILLMEG…SCLLCEDPQD (102 aa)) are cytoplasmic. Residues H300, H317, H344, E351, C360, and C363 each coordinate Zn(2+).

The protein belongs to the cation diffusion facilitator (CDF) transporter (TC 2.A.4) family. SLC30A subfamily. Homodimer. As to expression, expressed in endocrine pancreatic islet alpha and beta cells. May be more abundant in beta cells than in alpha cells. Expressed in cubical epithelium lining thyroid follicles (at protein level). In the adrenal gland, detected in the cortex, but not in the medulla (at protein level).

The protein resides in the cytoplasmic vesicle. Its subcellular location is the secretory vesicle membrane. The protein localises to the cell membrane. It carries out the reaction Zn(2+)(in) + 2 H(+)(out) = Zn(2+)(out) + 2 H(+)(in). Proton-coupled zinc ion antiporter mediating the entry of zinc into the lumen of pancreatic beta cell secretory granules, thereby regulating insulin secretion. The chain is Proton-coupled zinc antiporter SLC30A8 from Rattus norvegicus (Rat).